We begin with the raw amino-acid sequence, 253 residues long: 2,3-bisphosphoglycerate-dependent phosphoglycerate mutase (253 aa).

Residues 12–19 (RHGESEWN), 25–26 (TG), arginine 64, 91–94 (ERHY), lysine 102, 118–119 (RR), and 187–188 (GN) contribute to the substrate site. The active-site Tele-phosphohistidine intermediate is histidine 13. Residue glutamate 91 is the Proton donor/acceptor of the active site.

Belongs to the phosphoglycerate mutase family. BPG-dependent PGAM subfamily.

The catalysed reaction is (2R)-2-phosphoglycerate = (2R)-3-phosphoglycerate. It functions in the pathway carbohydrate degradation; glycolysis; pyruvate from D-glyceraldehyde 3-phosphate: step 3/5. In terms of biological role, catalyzes the interconversion of 2-phosphoglycerate and 3-phosphoglycerate. The protein is 2,3-bisphosphoglycerate-dependent phosphoglycerate mutase of Streptomyces griseus subsp. griseus (strain JCM 4626 / CBS 651.72 / NBRC 13350 / KCC S-0626 / ISP 5235).